The sequence spans 525 residues: Golgi resident protein GCP60 (525 aa).

Position 2 is an N-acetylalanine (Ala2). Residues 12–68 are disordered; sequence VSLDGLTLSPDSEERPGAEGAPPQTPPSSAPGNGLGSGASGQQREPGEAAAEGAAEE. At Ser13 the chain carries Phosphoserine. The residue at position 18 (Thr18) is a Phosphothreonine. Phosphoserine is present on residues Ser20 and Ser40. A compositionally biased stretch (low complexity) spans 52–64; that stretch reads GQQREPGEAAAEG. The ACB domain occupies 80–171; the sequence is LEELYGLALR…LNKCCPLLSA (92 aa). The stretch at 169-254 forms a coiled coil; the sequence is LSAYVASHRI…AALNSQTAVQ (86 aa). The tract at residues 180–226 is disordered; that stretch reads KEEEEKRRKAEEERRQREEEERERLQKEEEKRKREKEDRLRREEEER. Residues 238-305 form a q domain; Interaction with PI4KB, TBC1D22A and TBC1D22B region; sequence QQKQQIMAAL…QQQAALQKQQ (68 aa). Polar residues predominate over residues 319-336; that stretch reads KVNTAGASDTLSVNGQAK. The disordered stretch occupies residues 319–346; sequence KVNTAGASDTLSVNGQAKTHTENSEKVL. The segment covering 337–346 has biased composition (basic and acidic residues); that stretch reads THTENSEKVL. In terms of domain architecture, GOLD spans 381-523; the sequence is KEKIRQDADS…SKSVYYRVYY (143 aa). Residues 448-470 adopt a coiled-coil conformation; it reads SDEEEEEEENVTCEEKAKKNANK.

As to quaternary structure, homodimer. Interacts with the C-terminal cytoplasmic domain of giantin/GOLGB1. Interacts with PBR and PKA regulatory subunit RI-alpha. Does not interact with PKA regulatory subunit RI-beta nor PKA regulatory subunit RII-alpha. Interacts (via Q domain) with PI4KB (via N-terminus). Interacts (via Q domain) with TBC1D22A and TBC1D22B; interactions with PI4KB and with TBC1D22A and TBC1D22B are mutually exclusive. Interacts with C10ORF76 and RAB11B. In terms of tissue distribution, expressed in brain (hippocampus, olfactory bulb, neuronal and glial cells of the cortex), eye, submaxillary gland, testis (interstitial and tubular compartments), ovary (granulosa cells, theca cells at late stages and primary follicles), adrenal gland (fasciculata and glomerulosa cells), heart, liver, and steroidogenic cell lines.

Its subcellular location is the golgi apparatus membrane. The protein resides in the mitochondrion. Functionally, involved in the maintenance of Golgi structure by interacting with giantin, affecting protein transport between the endoplasmic reticulum and Golgi. Involved in hormone-induced steroid biosynthesis in testicular Leydig cells. Recruits PI4KB to the Golgi apparatus membrane; enhances the enzyme activity of PI4KB activity via its membrane recruitment thereby increasing the local concentration of the substrate in the vicinity of the kinase. The protein is Golgi resident protein GCP60 (Acbd3) of Mus musculus (Mouse).